A 388-amino-acid chain; its full sequence is Chaperone protein DnaJ (388 aa).

Residues 5 to 69 (DYYDVLGVDK…QKKAQYDQFG (65 aa)) form the J domain. The CR-type zinc finger occupies 145–227 (GKKTDITYTR…CHGKGTIDKK (83 aa)). 8 residues coordinate Zn(2+): C158, C161, C175, C178, C201, C204, C215, and C218. CXXCXGXG motif repeat units follow at residues 158–165 (CPTCDGSG), 175–182 (CDKCHGTG), 201–208 (CDKCGGRG), and 215–222 (CQTCHGKG).

This sequence belongs to the DnaJ family. Homodimer. Zn(2+) is required as a cofactor.

The protein resides in the cytoplasm. Its function is as follows. Participates actively in the response to hyperosmotic and heat shock by preventing the aggregation of stress-denatured proteins and by disaggregating proteins, also in an autonomous, DnaK-independent fashion. Unfolded proteins bind initially to DnaJ; upon interaction with the DnaJ-bound protein, DnaK hydrolyzes its bound ATP, resulting in the formation of a stable complex. GrpE releases ADP from DnaK; ATP binding to DnaK triggers the release of the substrate protein, thus completing the reaction cycle. Several rounds of ATP-dependent interactions between DnaJ, DnaK and GrpE are required for fully efficient folding. Also involved, together with DnaK and GrpE, in the DNA replication of plasmids through activation of initiation proteins. The protein is Chaperone protein DnaJ of Lactobacillus gasseri (strain ATCC 33323 / DSM 20243 / BCRC 14619 / CIP 102991 / JCM 1131 / KCTC 3163 / NCIMB 11718 / NCTC 13722 / AM63).